The following is a 491-amino-acid chain: UDP-N-acetylmuramate--L-alanine ligase (491 aa).

126-132 contributes to the ATP binding site; sequence GTHGKTT.

This sequence belongs to the MurCDEF family.

It localises to the cytoplasm. The catalysed reaction is UDP-N-acetyl-alpha-D-muramate + L-alanine + ATP = UDP-N-acetyl-alpha-D-muramoyl-L-alanine + ADP + phosphate + H(+). Its pathway is cell wall biogenesis; peptidoglycan biosynthesis. Cell wall formation. The polypeptide is UDP-N-acetylmuramate--L-alanine ligase (Salmonella paratyphi A (strain ATCC 9150 / SARB42)).